The chain runs to 1009 residues: Epididymis-specific alpha-mannosidase (1009 aa).

The signal sequence occupies residues 1–23 (MGQLCWLPLLAPLLLLRPPGVQS). Zn(2+)-binding residues include His-36, Asp-38, and Asp-151. Asp-151 functions as the Nucleophile in the catalytic mechanism. Residues Asn-226, Asn-249, Asn-294, and Asn-336 are each glycosylated (N-linked (GlcNAc...) asparagine). His-420 contacts Zn(2+). N-linked (GlcNAc...) asparagine glycosylation is found at Asn-516, Asn-608, Asn-670, Asn-675, Asn-748, Asn-808, Asn-812, and Asn-890. Residues 972–991 (GPGRHRGDTTSPSRPPGGPI) form a disordered region.

Belongs to the glycosyl hydrolase 38 family. The cofactor is Zn(2+).

The protein localises to the secreted. The enzyme catalyses Hydrolysis of terminal, non-reducing alpha-D-mannose residues in alpha-D-mannosides.. This is Epididymis-specific alpha-mannosidase (MAN2B2) from Homo sapiens (Human).